The following is a 233-amino-acid chain: Large ribosomal subunit protein uL1 (233 aa).

It belongs to the universal ribosomal protein uL1 family. As to quaternary structure, part of the 50S ribosomal subunit.

Its function is as follows. Binds directly to 23S rRNA. The L1 stalk is quite mobile in the ribosome, and is involved in E site tRNA release. Protein L1 is also a translational repressor protein, it controls the translation of the L11 operon by binding to its mRNA. The sequence is that of Large ribosomal subunit protein uL1 from Psychrobacter cryohalolentis (strain ATCC BAA-1226 / DSM 17306 / VKM B-2378 / K5).